The following is a 197-amino-acid chain: MKLLHLYEASLKRRPKTTNAIMTGALFGIGDVSAQLLFPTSKVNKGYDYKRTARAVIYGSLIFSFIGDKWYKILNNKIYMRNRPQYHWSNMVLRVAVDQLAFAPLGLPFYFTCMSIMEGRSFDVAKLKIKEQWWPTLLTNWAVWPLFQAINFSVVPLQHRLLAVNVVAIFWNTYLSYKNSKVMEKDKVPVHYPPVVE.

4 consecutive transmembrane segments (helical) span residues 20-40, 55-75, 97-117, and 137-157; these read AIMT…LFPT, AVIY…KILN, VDQL…MSIM, and LLTN…VVPL.

It belongs to the peroxisomal membrane protein PXMP2/4 family.

It localises to the mitochondrion inner membrane. Functionally, may be involved in cellular response to stress. Required to maintain mitochondrial DNA (mtDNA) integrity and stability. Required for ethanol metabolism and tolerance during heat shock. In Saccharomyces cerevisiae (strain ATCC 204508 / S288c) (Baker's yeast), this protein is Protein SYM1 (SYM1).